The primary structure comprises 535 residues: uncharacterized protein (535 aa).

Residues 1–34 (MKAIDNQIRNISSSHQDKHSDKVNSHQHHGKVDK) are disordered. Basic and acidic residues predominate over residues 15 to 34 (HQDKHSDKVNSHQHHGKVDK).

This is an uncharacterized protein from Escherichia coli (strain K12).